Reading from the N-terminus, the 631-residue chain is MLYNLRQELLAGIRAATSDAGYDYEVDQSAIELEDITDEEKGEFSSPISFSIAAAAGAPPVDVAAAIADAHRSNGLPAEVEAVTVEGGHINYHADTTDLADATLSTILRDGSEYGTRTDADPDTILADVSSPNIAKPLHVGHLRNTILSDAVMNILEARGHDVTRDNHLGDWGVQFGNLMHEYTEFGDEATLEDDAIEHLLDLYQQFEQRDSMLADLEDDETVTDQFADAVTEERDYHADSGKEWFTRLEQGDEDATALWERFRTVSIDRFKQTYDDLDVAFDVWNGESFYAQEGWNDVIIEKAIENDVAMRGEGESVYIPVYPDDYENVGDPQAADVDASLDRARQMREANDDLEDADFDPFYIVKSDGSTLYGTRDLATIEYRIEEYDADQSVYVVANEQNQYFQQLFVAARKMGYNDIKLKHIDYGLISLPEGSMSTRKGQIITAREVLDRAQDRAEEIIAEKGRIDDAEAQSVATKIALATIKYEMVAAKRERDTTFDIDESVALEGDTGPYVQYAATRGYSILDGADAAPEIDDLDPSVFNDTDVELLFELARYPLVLERCEERYDAAPLAHYLLQLAHVFNSFYHKNAVLDAENARTERLLLTKATTQIFDNGLGLLGIDVLEEM.

A 'HIGH' region motif is present at residues 132–142 (PNIAKPLHVGH).

It belongs to the class-I aminoacyl-tRNA synthetase family.

It localises to the cytoplasm. The enzyme catalyses tRNA(Arg) + L-arginine + ATP = L-arginyl-tRNA(Arg) + AMP + diphosphate. The chain is Arginine--tRNA ligase from Halobacterium salinarum (strain ATCC 700922 / JCM 11081 / NRC-1) (Halobacterium halobium).